A 326-amino-acid chain; its full sequence is MAQRVQLTATVSENQLGQRLDQALAEMFPDYSRSRIKEWILDQRVLVNGKLCDKPKEKVLGGEQVAINAEIEEEARFEPQDIPLDIVYEDEDIIVINKPRDLVVHPGAGNPDGTVLNALLHYYPPIADVPRAGIVHRLDKDTTGLMVVAKTVPAQTRLVESLQRREITREYEAVAIGHMTAGGTVDEPISRHPTKRTHMAVHPMGKPAVTHYRIMEHFRVHTRLRLRLETGRTHQIRVHMAHITHPLVGDPVYGGRPRPPKGASEAFISTLRKFDRQALHATMLRLYHPISGIEMEWHAPIPQDMVELIEVMRADFEEHKDEVDWL.

The 74-residue stretch at 18 to 91 folds into the S4 RNA-binding domain; it reads QRLDQALAEM…IPLDIVYEDE (74 aa). Aspartate 139 is an active-site residue.

This sequence belongs to the pseudouridine synthase RluA family.

The protein resides in the cytoplasm. It carries out the reaction uridine(1911/1915/1917) in 23S rRNA = pseudouridine(1911/1915/1917) in 23S rRNA. Responsible for synthesis of pseudouridine from uracil at positions 1911, 1915 and 1917 in 23S ribosomal RNA. The protein is Ribosomal large subunit pseudouridine synthase D (rluD) of Escherichia coli O157:H7.